Reading from the N-terminus, the 548-residue chain is Chaperonin GroEL (548 aa).

ATP contacts are provided by residues 30 to 33, Lys51, 87 to 91, Gly415, 479 to 481, and Asp495; these read TLGP, DGTTT, and NAA.

It belongs to the chaperonin (HSP60) family. Forms a cylinder of 14 subunits composed of two heptameric rings stacked back-to-back. Interacts with the co-chaperonin GroES.

It localises to the cytoplasm. It carries out the reaction ATP + H2O + a folded polypeptide = ADP + phosphate + an unfolded polypeptide.. Its function is as follows. Together with its co-chaperonin GroES, plays an essential role in assisting protein folding. The GroEL-GroES system forms a nano-cage that allows encapsulation of the non-native substrate proteins and provides a physical environment optimized to promote and accelerate protein folding. In Klebsiella pneumoniae subsp. pneumoniae (strain ATCC 700721 / MGH 78578), this protein is Chaperonin GroEL.